We begin with the raw amino-acid sequence, 455 residues long: UDP-N-acetylmuramoylalanine--D-glutamate ligase (455 aa).

An ATP-binding site is contributed by 117 to 123 (GTNGKTT).

This sequence belongs to the MurCDEF family.

The protein localises to the cytoplasm. The enzyme catalyses UDP-N-acetyl-alpha-D-muramoyl-L-alanine + D-glutamate + ATP = UDP-N-acetyl-alpha-D-muramoyl-L-alanyl-D-glutamate + ADP + phosphate + H(+). The protein operates within cell wall biogenesis; peptidoglycan biosynthesis. Cell wall formation. Catalyzes the addition of glutamate to the nucleotide precursor UDP-N-acetylmuramoyl-L-alanine (UMA). In Pelotomaculum thermopropionicum (strain DSM 13744 / JCM 10971 / SI), this protein is UDP-N-acetylmuramoylalanine--D-glutamate ligase.